A 45-amino-acid polypeptide reads, in one-letter code: DNA-directed RNA polymerase subunit Rpo12 (45 aa).

3 residues coordinate Zn(2+): Cys8, Cys23, and Cys26.

This sequence belongs to the archaeal Rpo12/eukaryotic RPC10 RNA polymerase subunit family. Part of the RNA polymerase complex. Zn(2+) is required as a cofactor.

The protein resides in the cytoplasm. The enzyme catalyses RNA(n) + a ribonucleoside 5'-triphosphate = RNA(n+1) + diphosphate. Functionally, DNA-dependent RNA polymerase (RNAP) catalyzes the transcription of DNA into RNA using the four ribonucleoside triphosphates as substrates. The sequence is that of DNA-directed RNA polymerase subunit Rpo12 from Methanothrix thermoacetophila (strain DSM 6194 / JCM 14653 / NBRC 101360 / PT) (Methanosaeta thermophila).